A 236-amino-acid polypeptide reads, in one-letter code: UPF0177 protein YaiH (236 aa).

6 helical membrane-spanning segments follow: residues Tyr16 to Tyr36, Ala51 to Ile71, Ile90 to Tyr110, Ile131 to Ala151, Thr180 to Tyr200, and Ile210 to Ile230.

It belongs to the UPF0177 family.

The protein localises to the cell membrane. This Lactococcus lactis subsp. lactis (strain IL1403) (Streptococcus lactis) protein is UPF0177 protein YaiH (yaiH).